The following is a 105-amino-acid chain: Protamine-2 (105 aa).

Residues 1-74 (MVRYRMRSPS…RRSCRRRRRH (74 aa)) form a disordered region. A phosphoserine mark is found at S8 and S10. Residues 33 to 42 (NPERVEDYGR) show a composition bias toward basic and acidic residues. Residues 43–74 (THRGHHRHRRCSRKRLHRIHKRRRSCRRRRRH) show a composition bias toward basic residues.

The protein belongs to the protamine P2 family. In terms of assembly, interacts with TDRP. In terms of processing, proteolytic processing into mature chains is required for histone eviction during spermatogenesis. Transition proteins (TNP1 and TNP2) are required for processing. Testis.

Its subcellular location is the nucleus. It is found in the chromosome. Protamines substitute for histones in the chromatin of sperm during the haploid phase of spermatogenesis. They compact sperm DNA into a highly condensed, stable and inactive complex. In Rattus tunneyi (Tunney's rat), this protein is Protamine-2 (Prm2).